Reading from the N-terminus, the 56-residue chain is Large ribosomal subunit protein bL33 (56 aa).

Belongs to the bacterial ribosomal protein bL33 family.

This chain is Large ribosomal subunit protein bL33, found in Glaesserella parasuis serovar 5 (strain SH0165) (Haemophilus parasuis).